A 131-amino-acid polypeptide reads, in one-letter code: Protein Turandot M (131 aa).

A signal peptide spans 1–23 (MNPTIYLSCLMVFSVFLLGKVNA).

The protein belongs to the Turandot family.

The protein resides in the secreted. Functionally, a humoral factor that may play a role in stress tolerance. Requires Mekk1 expression in the fat body to regulate response to septic injury and consequent immune response. The protein is Protein Turandot M of Drosophila melanogaster (Fruit fly).